We begin with the raw amino-acid sequence, 439 residues long: Glucose-6-phosphate 1-dehydrogenase (439 aa).

Position 100 (K100) interacts with NADP(+). The substrate site is built by H130, K134, E168, and D187. H192 (proton acceptor) is an active-site residue. Position 288 (K288) interacts with substrate.

It belongs to the glucose-6-phosphate dehydrogenase family.

The catalysed reaction is D-glucose 6-phosphate + NADP(+) = 6-phospho-D-glucono-1,5-lactone + NADPH + H(+). The protein operates within carbohydrate degradation; pentose phosphate pathway; D-ribulose 5-phosphate from D-glucose 6-phosphate (oxidative stage): step 1/3. In terms of biological role, catalyzes the oxidation of glucose 6-phosphate to 6-phosphogluconolactone. In Chlamydia trachomatis serovar D (strain ATCC VR-885 / DSM 19411 / UW-3/Cx), this protein is Glucose-6-phosphate 1-dehydrogenase.